The primary structure comprises 461 residues: High-affinity Na(+)/H(+) antiporter NhaS3 (461 aa).

The next 11 membrane-spanning stretches (helical) occupy residues 22–42 (TEIA…IYFA), 58–78 (VLGE…LLLF), 113–133 (SEVI…EIGL), 148–170 (AIVA…MTIF), 175–197 (IPAI…KVLA), 209–229 (IIIG…AVVG), 239–259 (ISNI…SILI), 280–300 (LLLV…IVQL), 360–380 (GLII…VTGF), 391–411 (LAIG…AGVG), and 424–444 (AIIV…RAVF).

This sequence belongs to the monovalent cation:proton antiporter 2 (CPA2) transporter (TC 2.A.37) family.

The protein resides in the cellular thylakoid membrane. Functionally, na(+)/H(+) antiporter that transports sodium from the cytoplasm into the thylakoid lumen in exchange for protons. Contributes to sodium homeostasis and tolerance. Also has Li(+)/H(+) antiport activity under K(+)-free conditions, but not under K(+)-rich conditions. This chain is High-affinity Na(+)/H(+) antiporter NhaS3 (nhaS3), found in Synechocystis sp. (strain ATCC 27184 / PCC 6803 / Kazusa).